A 331-amino-acid polypeptide reads, in one-letter code: Porphobilinogen deaminase (331 aa).

Cysteine 248 is subject to S-(dipyrrolylmethanemethyl)cysteine. Residues 307–331 (QLLQAPKQTGEPHDPDRHDKGTGRP) form a disordered region. The segment covering 316–331 (GEPHDPDRHDKGTGRP) has biased composition (basic and acidic residues).

It belongs to the HMBS family. As to quaternary structure, monomer. The cofactor is dipyrromethane.

It carries out the reaction 4 porphobilinogen + H2O = hydroxymethylbilane + 4 NH4(+). Its pathway is porphyrin-containing compound metabolism; protoporphyrin-IX biosynthesis; coproporphyrinogen-III from 5-aminolevulinate: step 2/4. Functionally, tetrapolymerization of the monopyrrole PBG into the hydroxymethylbilane pre-uroporphyrinogen in several discrete steps. This chain is Porphobilinogen deaminase, found in Acidothermus cellulolyticus (strain ATCC 43068 / DSM 8971 / 11B).